We begin with the raw amino-acid sequence, 301 residues long: ATP synthase gamma chain (301 aa).

The protein belongs to the ATPase gamma chain family. As to quaternary structure, F-type ATPases have 2 components, CF(1) - the catalytic core - and CF(0) - the membrane proton channel. CF(1) has five subunits: alpha(3), beta(3), gamma(1), delta(1), epsilon(1). CF(0) has three main subunits: a, b and c.

Its subcellular location is the cell inner membrane. Functionally, produces ATP from ADP in the presence of a proton gradient across the membrane. The gamma chain is believed to be important in regulating ATPase activity and the flow of protons through the CF(0) complex. The chain is ATP synthase gamma chain from Helicobacter pylori (strain Shi470).